The following is a 582-amino-acid chain: ATP-dependent lipid A-core flippase (582 aa).

Transmembrane regions (helical) follow at residues 16–36, 64–84, 153–173, 253–273, and 275–295; these read LWPTIAPFKAGLIVAGIALIL, LLWMPLVVIGLMILRGITSYI, IIGLFIMMFYYSWQLSIILVV, PIIQLIASLALAFVLYAASFP, and VMDSLTAGTITVVFSSMIALM. The region spanning 28–310 is the ABC transmembrane type-1 domain; the sequence is IVAGIALILN…LTNVNAQFQR (283 aa). The 237-residue stretch at 342–578 folds into the ABC transporter domain; the sequence is LEFRNVTFTY…HGVYAQLHKM (237 aa). 376–383 is a binding site for ATP; that stretch reads GRSGSGKS.

The protein belongs to the ABC transporter superfamily. Lipid exporter (TC 3.A.1.106) family. Homodimer.

The protein resides in the cell inner membrane. It carries out the reaction ATP + H2O + lipid A-core oligosaccharideSide 1 = ADP + phosphate + lipid A-core oligosaccharideSide 2.. Functionally, involved in lipopolysaccharide (LPS) biosynthesis. Translocates lipid A-core from the inner to the outer leaflet of the inner membrane. Transmembrane domains (TMD) form a pore in the inner membrane and the ATP-binding domain (NBD) is responsible for energy generation. This Salmonella choleraesuis (strain SC-B67) protein is ATP-dependent lipid A-core flippase.